The following is a 461-amino-acid chain: Bifunctional protein GlmU (461 aa).

Positions 1 to 236 (MNVLLQELFI…VFEIFGINNR (236 aa)) are pyrophosphorylase. UDP-N-acetyl-alpha-D-glucosamine contacts are provided by residues K27, Q80, 85–86 (GT), 109–111 (YGD), G146, E160, N175, and N234. D111 contributes to the Mg(2+) binding site. Position 234 (N234) interacts with Mg(2+). Residues 237 to 257 (FQLMKLEKIYQIEQAKKLLLN) are linker. The tract at residues 258–461 (GVTLSDYNRF…SILRKENNSK (204 aa)) is N-acetyltransferase. Position 358 (K358) interacts with UDP-N-acetyl-alpha-D-glucosamine. The active-site Proton acceptor is H370. UDP-N-acetyl-alpha-D-glucosamine is bound by residues Y373 and N384. Acetyl-CoA is bound by residues A387, A430, and R447.

The protein in the N-terminal section; belongs to the N-acetylglucosamine-1-phosphate uridyltransferase family. It in the C-terminal section; belongs to the transferase hexapeptide repeat family. Homotrimer. Requires Mg(2+) as cofactor.

The protein localises to the cytoplasm. The catalysed reaction is alpha-D-glucosamine 1-phosphate + acetyl-CoA = N-acetyl-alpha-D-glucosamine 1-phosphate + CoA + H(+). The enzyme catalyses N-acetyl-alpha-D-glucosamine 1-phosphate + UTP + H(+) = UDP-N-acetyl-alpha-D-glucosamine + diphosphate. Its pathway is nucleotide-sugar biosynthesis; UDP-N-acetyl-alpha-D-glucosamine biosynthesis; N-acetyl-alpha-D-glucosamine 1-phosphate from alpha-D-glucosamine 6-phosphate (route II): step 2/2. The protein operates within nucleotide-sugar biosynthesis; UDP-N-acetyl-alpha-D-glucosamine biosynthesis; UDP-N-acetyl-alpha-D-glucosamine from N-acetyl-alpha-D-glucosamine 1-phosphate: step 1/1. It functions in the pathway bacterial outer membrane biogenesis; LPS lipid A biosynthesis. Functionally, catalyzes the last two sequential reactions in the de novo biosynthetic pathway for UDP-N-acetylglucosamine (UDP-GlcNAc). The C-terminal domain catalyzes the transfer of acetyl group from acetyl coenzyme A to glucosamine-1-phosphate (GlcN-1-P) to produce N-acetylglucosamine-1-phosphate (GlcNAc-1-P), which is converted into UDP-GlcNAc by the transfer of uridine 5-monophosphate (from uridine 5-triphosphate), a reaction catalyzed by the N-terminal domain. The chain is Bifunctional protein GlmU from Wigglesworthia glossinidia brevipalpis.